A 206-amino-acid polypeptide reads, in one-letter code: Synaptosomal-associated protein 25 (206 aa).

Over residues 1–20 (MAEDADMRNELEEMQRRADQ) the composition is skewed to basic and acidic residues. The interval 1 to 25 (MAEDADMRNELEEMQRRADQLADES) is disordered. The interval 1-75 (MAEDADMRNE…QINKDMKEAE (75 aa)) is interaction with CENPF. The t-SNARE coiled-coil homology 1 domain occupies 19-81 (DQLADESLES…KEAEKNSTDL (63 aa)). S-palmitoyl cysteine attachment occurs at residues Cys85, Cys88, Cys90, and Cys92. The segment at 111–120 (GVVASQPARV) is interaction with ZDHHC17. Thr138 is modified (phosphothreonine). Positions 140-202 (DARENEMDEN…DEANQRATKM (63 aa)) constitute a t-SNARE coiled-coil homology 2 domain. Phosphoserine occurs at positions 154 and 187.

Belongs to the SNAP-25 family. In terms of assembly, part of the SNARE core complex containing SNAP25, VAMP2 and STX1A; this complex binds CPLX1. Found in a complex containing SYT1, SV2B and syntaxin-1. Found in a ternary complex with STX1A and VAMP8. Interacts with HSC70 and with SYT9, forming a complex with DNAJC5. The interaction with SYT9 is inhibited in presence of calcium. Isoform 1 and isoform 2 interact with BLOC1S6. Interacts with CENPF. Interacts with EQTN. Interacts with HGS. Interacts with KCNB1 (via N-terminus); reduces the voltage-dependent potassium channel KCNB1 activity in pancreatic beta cells. Interacts with OTOF. Interacts with RIMS1. Interacts with SNAPIN. Interacts with STXBP6. Interacts with TRIM9. Interacts with ZDHHC13 (via ANK repeats). Interacts with ZDHHC17 (via ANK repeats). Associates with the BLOC-1 complex. Interacts with PLCL1 (via C2 domain). Interacts with PRRT2; this interaction may impair the formation of the SNARE complex. Interacts with alpha-synuclein/SNCA. Interacts with PRPH2. Interacts with ROM1. Interacts with STX3. In terms of processing, palmitoylated. Cys-85 appears to be the main site, and palmitoylation is required for membrane association.

It localises to the cytoplasm. The protein resides in the perinuclear region. It is found in the cell membrane. Its subcellular location is the synapse. The protein localises to the synaptosome. It localises to the photoreceptor inner segment. Its function is as follows. t-SNARE involved in the molecular regulation of neurotransmitter release. May play an important role in the synaptic function of specific neuronal systems. Associates with proteins involved in vesicle docking and membrane fusion. Regulates plasma membrane recycling through its interaction with CENPF. Modulates the gating characteristics of the delayed rectifier voltage-dependent potassium channel KCNB1 in pancreatic beta cells. This chain is Synaptosomal-associated protein 25 (SNAP25), found in Pongo abelii (Sumatran orangutan).